Consider the following 396-residue polypeptide: Chaperone protein DnaJ 1 (396 aa).

The J domain occupies 10-75 (DYYKVLGVPK…KKRKEYDEAR (66 aa)). Positions 127 to 137 (LFNRGGAGPGT) are enriched in gly residues. The disordered stretch occupies residues 127 to 149 (LFNRGGAGPGTGTRTQPRRGQDI). The CR-type zinc finger occupies 163 to 241 (GATVPLRMSS…CKGSGRAKSS (79 aa)). 8 residues coordinate Zn(2+): Cys176, Cys179, Cys192, Cys195, Cys215, Cys218, Cys229, and Cys232. CXXCXGXG motif repeat units lie at residues 176 to 183 (CKACSGTG), 192 to 199 (CPTCVGTG), 215 to 222 (CPDCKGRG), and 229 to 236 (CEICKGSG).

The protein belongs to the DnaJ family. In terms of assembly, homodimer. It depends on Zn(2+) as a cofactor.

The protein localises to the cytoplasm. Participates actively in the response to hyperosmotic and heat shock by preventing the aggregation of stress-denatured proteins and by disaggregating proteins, also in an autonomous, DnaK-independent fashion. Unfolded proteins bind initially to DnaJ; upon interaction with the DnaJ-bound protein, DnaK hydrolyzes its bound ATP, resulting in the formation of a stable complex. GrpE releases ADP from DnaK; ATP binding to DnaK triggers the release of the substrate protein, thus completing the reaction cycle. Several rounds of ATP-dependent interactions between DnaJ, DnaK and GrpE are required for fully efficient folding. Also involved, together with DnaK and GrpE, in the DNA replication of plasmids through activation of initiation proteins. This is Chaperone protein DnaJ 1 from Streptomyces avermitilis (strain ATCC 31267 / DSM 46492 / JCM 5070 / NBRC 14893 / NCIMB 12804 / NRRL 8165 / MA-4680).